A 188-amino-acid polypeptide reads, in one-letter code: ATP synthase subunit delta (188 aa).

It belongs to the ATPase delta chain family. F-type ATPases have 2 components, F(1) - the catalytic core - and F(0) - the membrane proton channel. F(1) has five subunits: alpha(3), beta(3), gamma(1), delta(1), epsilon(1). F(0) has three main subunits: a(1), b(2) and c(10-14). The alpha and beta chains form an alternating ring which encloses part of the gamma chain. F(1) is attached to F(0) by a central stalk formed by the gamma and epsilon chains, while a peripheral stalk is formed by the delta and b chains.

The protein localises to the cell inner membrane. In terms of biological role, f(1)F(0) ATP synthase produces ATP from ADP in the presence of a proton or sodium gradient. F-type ATPases consist of two structural domains, F(1) containing the extramembraneous catalytic core and F(0) containing the membrane proton channel, linked together by a central stalk and a peripheral stalk. During catalysis, ATP synthesis in the catalytic domain of F(1) is coupled via a rotary mechanism of the central stalk subunits to proton translocation. Functionally, this protein is part of the stalk that links CF(0) to CF(1). It either transmits conformational changes from CF(0) to CF(1) or is implicated in proton conduction. This chain is ATP synthase subunit delta, found in Rhizobium johnstonii (strain DSM 114642 / LMG 32736 / 3841) (Rhizobium leguminosarum bv. viciae).